The chain runs to 167 residues: Epithelial membrane protein 2 (167 aa).

The helical transmembrane segment at 1–21 (MLVLLAFIIVFHITSAALLLV) threads the bilayer. N-linked (GlcNAc...) asparagine glycosylation is found at asparagine 44, asparagine 47, and asparagine 52. A run of 3 helical transmembrane segments spans residues 67–87 (TMILSTILCCIAFLIFLLQLF), 95–115 (FVLTSIIQLMACLCVMIAASI), and 143–163 (FILAWVAFAFTFISGLMYLIL).

Belongs to the PMP-22/EMP/MP20 family. Interacts with PTK2; regulates PTK2 activation and localization. Interacts with ITGB3; regulates the levels of the heterodimer ITGA5-ITGB3 integrin surface expression. Interacts with P2RX7 (via C-terminus). Interacts with ITGB1; the interaction may be direct or indirect and ITGB1 has a heterodimer form.

Its subcellular location is the golgi apparatus membrane. It localises to the cell membrane. The protein localises to the apical cell membrane. It is found in the membrane raft. The protein resides in the cytoplasm. Its subcellular location is the nucleus. It localises to the perinuclear region. In terms of biological role, functions as a key regulator of cell membrane composition by regulating protein surface expression. Also, plays a role in regulation of processes including cell migration, cell proliferation, cell contraction and cell adhesion. Regulates transepithelial migration of neutrophils into the alveolar lumen, potentially via mediation of cell surface expression of adhesion markers and lipid raft formation. Negatively regulates caveolae formation by reducing CAV1 expression and CAV1 amount by increasing lysosomal degradation. Facilitates surface trafficking and the formation of lipid rafts bearing GPI-anchor proteins. Regulates surface expression of MHC1 and ICAM1 proteins increasing susceptibility to T-cell mediated cytotoxicity. Regulates the plasma membrane expression of the integrin heterodimers ITGA6-ITGB1, ITGA5-ITGB3 and ITGA5-ITGB1 resulting in modulation of cell-matrix adhesion. Also regulates many processes through PTK2. Regulates blood vessel endothelial cell migration and angiogenesis by regulating VEGF protein expression through PTK2 activation. Regulates cell migration and cell contraction through PTK2 and SRC activation. Regulates focal adhesion density, F-actin conformation and cell adhesion capacity through interaction with PTK2. Positively regulates cell proliferation. Plays a role during cell death and cell blebbing. Promotes angiogenesis and vasculogenesis through induction of VEGFA via a HIF1A-dependent pathway. Also plays a role in embryo implantation by regulating surface trafficking of integrin heterodimer ITGA5-ITGB3. Plays a role in placental angiogenesis and uterine natural killer cell regulation at the maternal-fetal placental interface, however not required in the maternal tissues for a viable pregnancy. Involved in the early stages of embryogenic development and cardiogenesis, potentially via regulation of epithelial-mesenchymal transition timing. May play a role in glomerular filtration. In Bos taurus (Bovine), this protein is Epithelial membrane protein 2 (EMP2).